A 476-amino-acid chain; its full sequence is Aspartyl/glutamyl-tRNA(Asn/Gln) amidotransferase subunit B (476 aa).

Belongs to the GatB/GatE family. GatB subfamily. Heterotrimer of A, B and C subunits.

The catalysed reaction is L-glutamyl-tRNA(Gln) + L-glutamine + ATP + H2O = L-glutaminyl-tRNA(Gln) + L-glutamate + ADP + phosphate + H(+). The enzyme catalyses L-aspartyl-tRNA(Asn) + L-glutamine + ATP + H2O = L-asparaginyl-tRNA(Asn) + L-glutamate + ADP + phosphate + 2 H(+). In terms of biological role, allows the formation of correctly charged Asn-tRNA(Asn) or Gln-tRNA(Gln) through the transamidation of misacylated Asp-tRNA(Asn) or Glu-tRNA(Gln) in organisms which lack either or both of asparaginyl-tRNA or glutaminyl-tRNA synthetases. The reaction takes place in the presence of glutamine and ATP through an activated phospho-Asp-tRNA(Asn) or phospho-Glu-tRNA(Gln). The sequence is that of Aspartyl/glutamyl-tRNA(Asn/Gln) amidotransferase subunit B from Listeria monocytogenes serovar 1/2a (strain ATCC BAA-679 / EGD-e).